The sequence spans 145 residues: Ribosome-binding factor A (145 aa).

Residues 122-132 (KVQRDLESAPR) are compositionally biased toward basic and acidic residues. The tract at residues 122 to 145 (KVQRDLESAPREDDEGEPASSSRD) is disordered.

It belongs to the RbfA family. In terms of assembly, monomer. Binds 30S ribosomal subunits, but not 50S ribosomal subunits or 70S ribosomes.

The protein localises to the cytoplasm. Functionally, one of several proteins that assist in the late maturation steps of the functional core of the 30S ribosomal subunit. Associates with free 30S ribosomal subunits (but not with 30S subunits that are part of 70S ribosomes or polysomes). Required for efficient processing of 16S rRNA. May interact with the 5'-terminal helix region of 16S rRNA. This Methylorubrum extorquens (strain CM4 / NCIMB 13688) (Methylobacterium extorquens) protein is Ribosome-binding factor A.